The primary structure comprises 230 residues: ATP-dependent dethiobiotin synthetase BioD (230 aa).

12 to 17 (DVGKTV) contacts ATP. Position 16 (threonine 16) interacts with Mg(2+). Lysine 37 is a catalytic residue. Residue threonine 41 participates in substrate binding. ATP is bound by residues aspartate 49, 108–111 (EGAG), 168–169 (GS), and 198–200 (PEG). Residues aspartate 49 and glutamate 108 each coordinate Mg(2+).

This sequence belongs to the dethiobiotin synthetase family. In terms of assembly, homodimer. It depends on Mg(2+) as a cofactor.

The protein resides in the cytoplasm. The catalysed reaction is (7R,8S)-7,8-diammoniononanoate + CO2 + ATP = (4R,5S)-dethiobiotin + ADP + phosphate + 3 H(+). It functions in the pathway cofactor biosynthesis; biotin biosynthesis; biotin from 7,8-diaminononanoate: step 1/2. In terms of biological role, catalyzes a mechanistically unusual reaction, the ATP-dependent insertion of CO2 between the N7 and N8 nitrogen atoms of 7,8-diaminopelargonic acid (DAPA, also called 7,8-diammoniononanoate) to form a ureido ring. The sequence is that of ATP-dependent dethiobiotin synthetase BioD from Corynebacterium kroppenstedtii (strain DSM 44385 / JCM 11950 / CIP 105744 / CCUG 35717).